The sequence spans 701 residues: Protein SOSEKI 1 (701 aa).

A DIX-like oligomerization domain region spans residues Leu-8–Asp-101. 4 disordered regions span residues Ser-238–Gly-262, Leu-300–Glu-329, Pro-366–Lys-389, and Ile-538–Pro-575. A compositionally biased stretch (basic and acidic residues) spans Ser-306–Ser-319. Residues Ile-658–Ala-687 form a C2HC/C3H-type zinc finger. Cys-662, Cys-665, His-677, and Cys-681 together coordinate Zn(2+).

This sequence belongs to the SOSEKI family. In terms of assembly, homodimer. Forms long polymer filaments with other SOKs proteins polymers crucial for polar localization and biological activity. Zn(2+) is required as a cofactor.

Its subcellular location is the cell membrane. Its function is as follows. SOSEKI proteins locally interpret global polarity cues and can influence cell division orientation to coordinate cell polarization relative to body axes. This Physcomitrium patens (Spreading-leaved earth moss) protein is Protein SOSEKI 1.